Here is a 218-residue protein sequence, read N- to C-terminus: Small ribosomal subunit protein uS3c (218 aa).

In terms of domain architecture, KH type-2 spans 39–118 (IRNFIKNYVQ…KLNIAITRIA (80 aa)).

This sequence belongs to the universal ribosomal protein uS3 family. Part of the 30S ribosomal subunit.

The protein localises to the plastid. It localises to the chloroplast. The polypeptide is Small ribosomal subunit protein uS3c (rps3) (Ipomoea purpurea (Common morning glory)).